A 156-amino-acid polypeptide reads, in one-letter code: Small ribosomal subunit protein uS7 (156 aa).

This sequence belongs to the universal ribosomal protein uS7 family. Part of the 30S ribosomal subunit. Contacts proteins S9 and S11.

Its function is as follows. One of the primary rRNA binding proteins, it binds directly to 16S rRNA where it nucleates assembly of the head domain of the 30S subunit. Is located at the subunit interface close to the decoding center, probably blocks exit of the E-site tRNA. The chain is Small ribosomal subunit protein uS7 from Carboxydothermus hydrogenoformans (strain ATCC BAA-161 / DSM 6008 / Z-2901).